The sequence spans 747 residues: Pseudouridine-metabolizing bifunctional protein C1861.05 (747 aa).

The pseudouridine-5'-phosphate glycosidase stretch occupies residues 1-379 (MLIVMNRGCR…KVSDKGVSSS (379 aa)). Residue glutamate 61 is the Proton donor; for PsiMP glycosidase activity of the active site. The substrate site is built by lysine 123 and valine 143. Aspartate 175 lines the Mn(2+) pocket. 177-179 (SAD) provides a ligand contact to substrate. Lysine 196 functions as the Nucleophile; for PsiMP glycosidase activity in the catalytic mechanism. A pseudouridine kinase region spans residues 380–747 (KKKITETTSK…VNPEIKTLLK (368 aa)).

It in the N-terminal section; belongs to the pseudouridine-5'-phosphate glycosidase family. This sequence in the C-terminal section; belongs to the carbohydrate kinase PfkB family. Mn(2+) serves as cofactor.

It is found in the cytoplasm. The enzyme catalyses D-ribose 5-phosphate + uracil = psi-UMP + H2O. The catalysed reaction is pseudouridine + ATP = psi-UMP + ADP + H(+). Bifunctional enzyme that catalyzes the phosphorylation of pseudouridine to pseudouridine 5'-phosphate (PsiMP), and the reversible cleavage of pseudouridine 5'-phosphate to ribose 5-phosphate and uracil. Is involved in a pseudouridine degradation pathway. The sequence is that of Pseudouridine-metabolizing bifunctional protein C1861.05 from Schizosaccharomyces pombe (strain 972 / ATCC 24843) (Fission yeast).